Here is a 316-residue protein sequence, read N- to C-terminus: Acetaldehyde dehydrogenase (316 aa).

11-14 (SGNI) lines the NAD(+) pocket. C131 serves as the catalytic Acyl-thioester intermediate. NAD(+) contacts are provided by residues 162–170 (SAGPGTRAN) and N289.

It belongs to the acetaldehyde dehydrogenase family. As to quaternary structure, interacts with MhpE.

It carries out the reaction acetaldehyde + NAD(+) + CoA = acetyl-CoA + NADH + H(+). Its pathway is aromatic compound metabolism; 3-phenylpropanoate degradation. Its function is as follows. Catalyzes the conversion of acetaldehyde to acetyl-CoA, using NAD(+) and coenzyme A. Is the final enzyme in the meta-cleavage pathway for the degradation of aromatic compounds. The polypeptide is Acetaldehyde dehydrogenase (Klebsiella pneumoniae (strain 342)).